The sequence spans 306 residues: 1-aminocyclopropane-1-carboxylate oxidase (306 aa).

The 101-residue stretch at 153 to 253 folds into the Fe2OG dioxygenase domain; that stretch reads PFFGTKVSHY…RRSIASFYNP (101 aa). Fe cation-binding residues include H177, D179, and H234.

This sequence belongs to the iron/ascorbate-dependent oxidoreductase family. Requires Fe cation as cofactor.

It catalyses the reaction 1-aminocyclopropane-1-carboxylate + L-ascorbate + O2 = ethene + L-dehydroascorbate + hydrogen cyanide + CO2 + 2 H2O. It functions in the pathway alkene biosynthesis; ethylene biosynthesis via S-adenosyl-L-methionine; ethylene from S-adenosyl-L-methionine: step 2/2. This chain is 1-aminocyclopropane-1-carboxylate oxidase (MAO1B), found in Musa acuminata (Banana).